Here is a 159-residue protein sequence, read N- to C-terminus: Transcriptional repressor NrdR (159 aa).

Residues 3 to 34 (CPTCQNTDSRVLESRSADTGKSVRRRRECLNC) fold into a zinc finger. The ATP-cone domain occupies 49 to 139 (ISVLKKDGSR…VYRKFNGVKD (91 aa)).

This sequence belongs to the NrdR family. The cofactor is Zn(2+).

Its function is as follows. Negatively regulates transcription of bacterial ribonucleotide reductase nrd genes and operons by binding to NrdR-boxes. This chain is Transcriptional repressor NrdR, found in Prochlorococcus marinus (strain MIT 9515).